A 3912-amino-acid chain; its full sequence is Ubiquitin carboxyl-terminal hydrolase puf (3912 aa).

Disordered regions lie at residues 101–172 (AQQQ…HKSH), 518–590 (NVTA…ISPE), 660–688 (DVPS…ECSD), 851–878 (VVSG…VQPS), and 1491–1611 (SRRG…PALS). Residues 106–133 (EQQRDEASAQAEAKESSAPAEEPKKEEP) are compositionally biased toward basic and acidic residues. The span at 134 to 143 (SGSAGEEAQG) shows a compositional bias: low complexity. The span at 150 to 164 (KKPPVGPCTPPPPQT) shows a compositional bias: pro residues. Residues 522–532 (SSSDSGSIEGS) are compositionally biased toward low complexity. Over residues 576 to 585 (ICDPTTEKGK) the composition is skewed to basic and acidic residues. Positions 660–687 (DVPSSDEADGEADGDGEGELLADSDECS) are enriched in acidic residues. Over residues 862–876 (KASQGSSTSGSTPVQ) the composition is skewed to polar residues. A compositionally biased stretch (basic residues) spans 1511 to 1520 (VKKSSMGRRR). Residues 1550-1567 (TPSTGLQDVETEASSSSG) show a composition bias toward polar residues. The segment covering 1583 to 1594 (KGETFEQEKERP) has biased composition (basic and acidic residues). Residues 1600-1609 (PPSPTPPPPA) are compositionally biased toward pro residues. The region spanning 2015-2380 (VGLTNLGATC…SAYMLFYERR (366 aa)) is the USP domain. Catalysis depends on Cys-2024, which acts as the Nucleophile. Positions 2249 to 2263 (YKEERERRQKEKEGA) are enriched in basic and acidic residues. The interval 2249–2274 (YKEERERRQKEKEGADGSGDGNDNEK) is disordered. The active-site Proton acceptor is the His-2305. Disordered regions lie at residues 2391–2529 (ELLV…TSKA), 3322–3344 (QQSQ…LQQQ), 3657–3776 (SERF…EERE), and 3800–3912 (ASVP…PTQI). Basic and acidic residues-rich tracts occupy residues 2402 to 2413 (VEEKSEAEEPTK) and 2433 to 2488 (EKDK…EKPT). A compositionally biased stretch (low complexity) spans 2504-2523 (NCDNHQQNNNSNSKASNDQQ). Over residues 3657–3703 (SERFRKESERDPFPNKKQKRDSQKIKEKEHPQPESEKETSTENDKPS) the composition is skewed to basic and acidic residues. Residues 3706 to 3721 (SMESSGNAEQATDSTK) show a composition bias toward polar residues. Residues 3741–3751 (SDDETELEDEL) are compositionally biased toward acidic residues. Positions 3766–3776 (TAQDRVNEERE) are enriched in basic and acidic residues. Positions 3865–3877 (PKTSQTNGSQQNE) are enriched in polar residues. Residues 3878 to 3912 (SPPAATSADTAPANPSPAPAAAVASTSQAASPTQI) are compositionally biased toward low complexity.

This sequence belongs to the peptidase C19 family. As to quaternary structure, interacts with Myc and ago.

It localises to the nucleus. The enzyme catalyses Thiol-dependent hydrolysis of ester, thioester, amide, peptide and isopeptide bonds formed by the C-terminal Gly of ubiquitin (a 76-residue protein attached to proteins as an intracellular targeting signal).. Ubiquitin hydrolase that can remove conjugated ubiquitin from target proteins and polyubiquitin chains. Essential for Myc-mediated cell growth and proliferation in developing eyes and wings. In the wing and eye, the deubiquitinating activity acts as an antagonist to the SCF E3 ubiquitin-protein ligase member archipelago (ago) to regulate Myc and CycE stability and thus control cell growth and proliferation. Also appears to regulate ago by modulating its induction by Myc. May also promote cell apoptosis in the wing imaginal disk, acting in an apoptotic pathway that appears to be largely independent of Myc. Required for preventing the activation of the immune deficiency (Imd) and Toll signaling cascades under unchallenged conditions. Also appears to be involved in modulating the differential expression of certain antimicrobial peptides (AMP) in response to infection by either Gram-positive or Gram-negative bacteria. Involved in the regulation of DNA damage repair pathways, including euchromatic site-specific double strand break (DSB) repair. In Drosophila melanogaster (Fruit fly), this protein is Ubiquitin carboxyl-terminal hydrolase puf.